We begin with the raw amino-acid sequence, 169 residues long: Prolyl-tRNA synthetase associated domain-containing protein 1 (169 aa).

Belongs to the PRORSD1 family.

The protein is Prolyl-tRNA synthetase associated domain-containing protein 1 (Prorsd1) of Mus musculus (Mouse).